A 688-amino-acid chain; its full sequence is MPVSEAFAKLCVNEKPPAESAVAVKSLVFKPKTPKSATPVPIVVVALQSTTTPSALIANATSSKDPRLARDDLVKQAFQSESARAFILGDLANATSNFHLLIDHELGTVDGDTILQLNDSTYMKKSDMMKFLNNFEDSQKVVDFSQEVSKETATEGKKQQKKQQPSKAGTAAAAAAAALEDAKLIGITVDKALDFPGWYQQILTKGEMLDYYDVSGCYILRPPSYAIWENIQKWFDDKIKAIGVQNAYFPMFVSSRVLEKEKDHVEGFAPEVAWVTRAGSSELEEPIAIRPTSETVMYPYYAKWVQSYRDLPLKLNQWNSVVRWEFKHPQPFLRTREFLWQEGHTAHLTAKDAEEEVLQILDFYAGVYEELLAVPVVKGRKTEKEKFAGGDFTTTCEGYIPQTGRGIQGATSHHLGQNFSKMFNLSVENPLGSDHPKIFAYQNSWGLSTRVIGVMVMIHSDNKGLVIPPRVSQFQSVVIPVGITKKTSEEQRKHIHETARSVESRLKKVGIRAFGDYNDNYTPGWKFSQYELKGIPIRIELGPKDIEKNQVVVVRRNDSKKYVVSFDELEARIPEILEEMQGDLFKKAKELFDTHRVIVNEWSGFVPALNKKNVILAPWCGVMECEEDIKESSAKKDDGEEFEEDDKAPSMGAKSLCIPFDQPVLNEGQKCIKCERIAVNYCMFGRSY.

At S149 the chain carries Phosphoserine. T170 carries the phosphothreonine modification. The interval 631-650 (ESSAKKDDGEEFEEDDKAPS) is disordered. Position 655 is a phosphoserine (S655).

The protein belongs to the class-II aminoacyl-tRNA synthetase family.

It carries out the reaction tRNA(Pro) + L-proline + ATP = L-prolyl-tRNA(Pro) + AMP + diphosphate. This is Putative proline--tRNA ligase YHR020W from Saccharomyces cerevisiae (strain ATCC 204508 / S288c) (Baker's yeast).